The primary structure comprises 1016 residues: Probably inactive leucine-rich repeat receptor-like protein kinase At3g28040 (1016 aa).

An N-terminal signal peptide occupies residues 1-26 (MGKQRRTMISFTLFLTLTMMSSLING). Residues 27 to 646 (DTDSIQLNDD…FHRRMFLSVS (620 aa)) lie on the Extracellular side of the membrane. LRR repeat units lie at residues 102-124 (RLKV…SNNN), 125-147 (HLQK…LGSI), 149-171 (SLQH…LFNN), 174-196 (SLRY…LFRC), 198-219 (VLNS…VSGI), 224-245 (RLRA…GILS), 248-270 (NLKE…IGLC), 272-295 (HLNR…QKLK), 296-318 (SLNH…IGDM), 320-342 (GLVH…ISNL), 344-366 (SLKD…LESC), 368-390 (ELMI…FFDL), 391-413 (GLQE…SSRL), 416-438 (SLIR…VGLF), 440-462 (HMRY…IEFL), 464-486 (NLTV…ICES), 488-510 (SLQI…IGNC), 512-535 (SLKL…SNLQ), 536-559 (ELKI…GDLQ), and 560-582 (NLLL…DVFQ). N-linked (GlcNAc...) asparagine glycosylation is found at Asn-112, Asn-135, and Asn-171. The N-linked (GlcNAc...) asparagine glycan is linked to Asn-203. N-linked (GlcNAc...) asparagine glycosylation occurs at Asn-349. 4 N-linked (GlcNAc...) asparagine glycosylation sites follow: Asn-445, Asn-464, Asn-509, and Asn-522. N-linked (GlcNAc...) asparagine glycosylation occurs at Asn-565. A helical membrane pass occupies residues 647–667 (VIVAISAAILIFSGVIIITLL). Residues 668–1016 (NASVRRRLAF…PVPHRIMDSF (349 aa)) are Cytoplasmic-facing. The Protein kinase domain maps to 726-1013 (LNKASRIGEG…INSPVPHRIM (288 aa)). ATP contacts are provided by residues 732-740 (IGEGVFGTV) and Lys-755. Phosphotyrosine is present on residues Tyr-841 and Tyr-898.

It belongs to the protein kinase superfamily. Ser/Thr protein kinase family.

It localises to the membrane. This is Probably inactive leucine-rich repeat receptor-like protein kinase At3g28040 from Arabidopsis thaliana (Mouse-ear cress).